Reading from the N-terminus, the 737-residue chain is Amyloid-beta A4 protein (737 aa).

An N-terminal signal peptide occupies residues Met1–Ser18. At Ser19–Ala668 the chain is on the extracellular side. Residues Leu29 to Val124 are GFLD subdomain. The 162-residue stretch at Leu29 to Ala190 folds into the E1 domain. 6 disulfides stabilise this stretch: Cys39–Cys63, Cys74–Cys118, Cys99–Cys106, Cys134–Cys188, Cys145–Cys175, and Cys159–Cys187. The segment at Asp132–Ala190 is cuBD subdomain. Cu cation is bound by residues His148, His152, and Tyr169. Acidic residues-rich tracts occupy residues Glu193–Asp207 and Gly242–Ser262. Residues Glu193–Glu280 form a disordered region. A BPTI/Kunitz inhibitor domain is found at Val286 to Leu344. 3 disulfide bridges follow: Cys290-Cys340, Cys299-Cys323, and Cys315-Cys336. The region spanning Ala354–Ala545 is the E2 domain. Asn522 is a glycosylation site (N-linked (GlcNAc...) asparagine). A helical transmembrane segment spans residues Ile669–Met689. Residues Leu690–Asn737 lie on the Cytoplasmic side of the membrane. Residues Tyr724–Tyr729 carry the YENPXY motif motif. The clathrin-binding stretch occupies residues Asn726–Tyr729.

It belongs to the APP family.

It is found in the membrane. Functional neuronal receptor which couples to intracellular signaling pathway through the GTP-binding protein G(O). The chain is Amyloid-beta A4 protein (app) from Takifugu rubripes (Japanese pufferfish).